The chain runs to 246 residues: Orotidine 5'-phosphate decarboxylase (246 aa).

Residues Asp-22, Lys-44, 71–80, Thr-130, Arg-191, Gln-201, Gly-221, and Arg-222 contribute to the substrate site; that span reads DLKYHDIPHT. Lys-73 serves as the catalytic Proton donor.

The protein belongs to the OMP decarboxylase family. Type 1 subfamily. As to quaternary structure, homodimer.

The enzyme catalyses orotidine 5'-phosphate + H(+) = UMP + CO2. Its pathway is pyrimidine metabolism; UMP biosynthesis via de novo pathway; UMP from orotate: step 2/2. Catalyzes the decarboxylation of orotidine 5'-monophosphate (OMP) to uridine 5'-monophosphate (UMP). The polypeptide is Orotidine 5'-phosphate decarboxylase (Neisseria meningitidis serogroup A / serotype 4A (strain DSM 15465 / Z2491)).